Consider the following 141-residue polypeptide: Cystatin-SN (141 aa).

The N-terminal stretch at 1–20 (MAQYLSTLLLLLATLAVALA) is a signal peptide. The Secondary area of contact signature appears at 76-80 (QTVGG). 2 disulfide bridges follow: cysteine 94–cysteine 104 and cysteine 118–cysteine 138.

The protein belongs to the cystatin family. As to expression, expressed in submandibular and sublingual saliva but not in parotid saliva (at protein level). Expressed in saliva, tears, urine and seminal fluid.

The protein localises to the secreted. Human saliva appears to contain several cysteine proteinase inhibitors that are immunologically related to cystatin S but that differ in their specificity due to amino acid sequence differences. Cystatin SN, with a pI of 7.5, is a much better inhibitor of papain and dipeptidyl peptidase I than is cystatin S, although both inhibit ficin equally well. The chain is Cystatin-SN (CST1) from Homo sapiens (Human).